A 146-amino-acid chain; its full sequence is MADKLEFELVSPEKLLVSQPVAMVVVPGADGLFGVLPGHAPMIVTVRPGIIDVYGDNQTTVSRRIFVAGGFAEVTDTRCTVLAEEASDLDALLKSDTAALEKQISDLREDIEDATSDVERRALETRLVTTQAKLDLIASQQDAEAA.

Belongs to the ATPase epsilon chain family. In terms of assembly, F-type ATPases have 2 components, CF(1) - the catalytic core - and CF(0) - the membrane proton channel. CF(1) has five subunits: alpha(3), beta(3), gamma(1), delta(1), epsilon(1). CF(0) has three main subunits: a, b and c.

Its subcellular location is the cell inner membrane. Its function is as follows. Produces ATP from ADP in the presence of a proton gradient across the membrane. This is ATP synthase epsilon chain from Rhodospirillum centenum (strain ATCC 51521 / SW).